The following is a 633-amino-acid chain: Biosynthetic arginine decarboxylase (633 aa).

Lysine 101 is subject to N6-(pyridoxal phosphate)lysine. 284–294 (VDVGGGLGVDY) lines the substrate pocket.

This sequence belongs to the Orn/Lys/Arg decarboxylase class-II family. SpeA subfamily. Requires Mg(2+) as cofactor. Pyridoxal 5'-phosphate serves as cofactor.

It catalyses the reaction L-arginine + H(+) = agmatine + CO2. The protein operates within amine and polyamine biosynthesis; agmatine biosynthesis; agmatine from L-arginine: step 1/1. Its function is as follows. Catalyzes the biosynthesis of agmatine from arginine. The polypeptide is Biosynthetic arginine decarboxylase (Aeromonas hydrophila subsp. hydrophila (strain ATCC 7966 / DSM 30187 / BCRC 13018 / CCUG 14551 / JCM 1027 / KCTC 2358 / NCIMB 9240 / NCTC 8049)).